The sequence spans 250 residues: Cobalt transport protein CbiM (250 aa).

The signal sequence occupies residues 1 to 26 (MNKKEKRIVAIAAAFALCFGISPAVN). 6 consecutive transmembrane segments (helical) span residues 38-58 (KYCITWGILSIPFLVAGYFSI), 68-88 (SITMLAMAGAFVFVLSSLKIP), 102-122 (LGAILFGPSAVSILGIIVLIF), 134-154 (TLGANTFSMAIAGPFVSFGIY), 165-185 (LSGIFLAAFVGDLFTYCVTSI), and 209-229 (FAPTQVPLAIIEGILTVVIMI).

It belongs to the CbiM family. Forms an energy-coupling factor (ECF) transporter complex composed of an ATP-binding protein (A component, CbiO), a transmembrane protein (T component, CbiQ) and 2 possible substrate-capture proteins (S components, CbiM and CbiN) of unknown stoichimetry.

The protein localises to the cell membrane. Its pathway is cofactor biosynthesis; adenosylcobalamin biosynthesis. Part of the energy-coupling factor (ECF) transporter complex CbiMNOQ involved in cobalt import. The sequence is that of Cobalt transport protein CbiM from Lachnoclostridium phytofermentans (strain ATCC 700394 / DSM 18823 / ISDg) (Clostridium phytofermentans).